Here is a 442-residue protein sequence, read N- to C-terminus: tRNA modification GTPase MnmE (442 aa).

Positions 23, 82, and 121 each coordinate (6S)-5-formyl-5,6,7,8-tetrahydrofolate. The region spanning 217–363 (PFKIAIIGET…LVDLLTKYIN (147 aa)) is the TrmE-type G domain. Residue asparagine 227 participates in K(+) binding. Residues 227 to 232 (NVGKSS), 246 to 252 (SNIKGST), and 271 to 274 (DTAG) each bind GTP. Position 231 (serine 231) interacts with Mg(2+). Positions 246, 248, and 251 each coordinate K(+). A Mg(2+)-binding site is contributed by threonine 252. A (6S)-5-formyl-5,6,7,8-tetrahydrofolate-binding site is contributed by lysine 442.

This sequence belongs to the TRAFAC class TrmE-Era-EngA-EngB-Septin-like GTPase superfamily. TrmE GTPase family. As to quaternary structure, homodimer. Heterotetramer of two MnmE and two MnmG subunits. The cofactor is K(+).

It is found in the cytoplasm. Its function is as follows. Exhibits a very high intrinsic GTPase hydrolysis rate. Involved in the addition of a carboxymethylaminomethyl (cmnm) group at the wobble position (U34) of certain tRNAs, forming tRNA-cmnm(5)s(2)U34. This is tRNA modification GTPase MnmE from Mycoplasma genitalium (strain ATCC 33530 / DSM 19775 / NCTC 10195 / G37) (Mycoplasmoides genitalium).